Reading from the N-terminus, the 178-residue chain is Relaxin-like protein SQ10 (178 aa).

Positions methionine 1–glycine 20 are cleaved as a signal peptide. 3 disulfides stabilise this stretch: cysteine 34–cysteine 165, cysteine 46–cysteine 178, and cysteine 164–cysteine 169. Residues glutamate 54–serine 150 constitute a propeptide, connecting peptide.

Belongs to the insulin family. Heterodimer of a B chain and an A chain linked by two disulfide bonds.

It is found in the secreted. This chain is Relaxin-like protein SQ10, found in Oryctolagus cuniculus (Rabbit).